Here is a 281-residue protein sequence, read N- to C-terminus: Very long chain fatty acid elongase 7 (281 aa).

A2 carries the post-translational modification N-acetylalanine. Residues 2–27 (AFSDLTSRTVRLYDNWIKDADPRVED) are Lumenal-facing. A helical transmembrane segment spans residues 28 to 48 (WLLMSSPLPQTIILGFYVYFV). Residues 49-66 (TSLGPKLMENRKPFELKK) lie on the Cytoplasmic side of the membrane. Residues 67-87 (VMITYNFSIVLFSVYMFYEFI) traverse the membrane as a helical segment. Topologically, residues 88–115 (MSGWGTGYSFRCDIVDYSQSPTALRMVR) are lumenal. An intrachain disulfide couples C99 to C231. Residues 116–136 (TCWLYYFSKFIELLDTIFFIL) traverse the membrane as a helical segment. Positions 124, 137, 139, 142, and 147 each coordinate 3-oxoeicosanoyl-CoA. Over 137–142 (RKKNSQ) the chain is Cytoplasmic. The helical transmembrane segment at 143–162 (VTFLHVFHHTIMPWTWWFGV) threads the bilayer. Residues 147–151 (HVFHH) carry the HxxHH motif motif. H150 (nucleophile) is an active-site residue. Residues 163-171 (KFAAGGLGT) lie on the Lumenal side of the membrane. A helical membrane pass occupies residues 172–194 (FHAFLNTAVHVVMYSYYGLCALG). 4 residues coordinate 3-oxoeicosanoyl-CoA: Y187, K204, T208, and Q211. At 195 to 206 (PDYQKYLWWKKY) the chain is on the cytoplasmic side. The helical transmembrane segment at 207 to 227 (LTSLQLIQFVLITIHISQFFF) threads the bilayer. At 228-236 (MEDCKYQFP) the chain is on the lumenal side. The helical transmembrane segment at 237-257 (VFQYIIMSYGCIFLLLFLHFW) threads the bilayer. At 258 to 281 (YRAYTKGQRLPKTVKHGICKNKDH) the chain is on the cytoplasmic side. R266 contributes to the 3-oxoeicosanoyl-CoA binding site. Positions 277-281 (KNKDH) match the Di-lysine motif motif.

Belongs to the ELO family. ELOVL7 subfamily. In terms of assembly, homodimer. Interacts with TECR.

The protein localises to the endoplasmic reticulum membrane. The catalysed reaction is a very-long-chain acyl-CoA + malonyl-CoA + H(+) = a very-long-chain 3-oxoacyl-CoA + CO2 + CoA. It catalyses the reaction eicosanoyl-CoA + malonyl-CoA + H(+) = 3-oxodocosanoyl-CoA + CO2 + CoA. The enzyme catalyses (5Z,8Z,11Z,14Z)-eicosatetraenoyl-CoA + malonyl-CoA + H(+) = (7Z,10Z,13Z,16Z)-3-oxodocosatetraenoyl-CoA + CO2 + CoA. It carries out the reaction (6Z,9Z,12Z)-octadecatrienoyl-CoA + malonyl-CoA + H(+) = (8Z,11Z,14Z)-3-oxoeicosatrienoyl-CoA + CO2 + CoA. The catalysed reaction is (9Z,12Z)-octadecadienoyl-CoA + malonyl-CoA + H(+) = (11Z,14Z)-3-oxoicosa-11,14-dienoyl-CoA + CO2 + CoA. It catalyses the reaction (9Z)-octadecenoyl-CoA + malonyl-CoA + H(+) = 3-oxo-(11Z)-eicosenoyl-CoA + CO2 + CoA. The enzyme catalyses octadecanoyl-CoA + malonyl-CoA + H(+) = 3-oxoeicosanoyl-CoA + CO2 + CoA. It carries out the reaction hexadecanoyl-CoA + malonyl-CoA + H(+) = 3-oxooctadecanoyl-CoA + CO2 + CoA. The catalysed reaction is (9Z,12Z,15Z)-octadecatrienoyl-CoA + malonyl-CoA + H(+) = (11Z,14Z,17Z)-3-oxoeicosatrienoyl-CoA + CO2 + CoA. It participates in lipid metabolism; fatty acid biosynthesis. In terms of biological role, catalyzes the first and rate-limiting reaction of the four reactions that constitute the long-chain fatty acids elongation cycle. This endoplasmic reticulum-bound enzymatic process allows the addition of 2 carbons to the chain of long- and very long-chain fatty acids (VLCFAs) per cycle. Condensing enzyme with higher activity toward C18 acyl-CoAs, especially C18:3(n-3) acyl-CoAs and C18:3(n-6)-CoAs. Also active toward C20:4-, C18:0-, C18:1-, C18:2- and C16:0-CoAs, and weakly toward C20:0-CoA. Little or no activity toward C22:0-, C24:0-, or C26:0-CoAs. May participate in the production of saturated and polyunsaturated VLCFAs of different chain lengths that are involved in multiple biological processes as precursors of membrane lipids and lipid mediators. This is Very long chain fatty acid elongase 7 from Bos taurus (Bovine).